The following is a 208-amino-acid chain: Putative 3-methyladenine DNA glycosylase (208 aa).

The protein belongs to the DNA glycosylase MPG family.

In Prosthecochloris aestuarii (strain DSM 271 / SK 413), this protein is Putative 3-methyladenine DNA glycosylase.